A 254-amino-acid chain; its full sequence is 3-deoxy-manno-octulosonate cytidylyltransferase (254 aa).

The protein belongs to the KdsB family.

Its subcellular location is the cytoplasm. The catalysed reaction is 3-deoxy-alpha-D-manno-oct-2-ulosonate + CTP = CMP-3-deoxy-beta-D-manno-octulosonate + diphosphate. The protein operates within nucleotide-sugar biosynthesis; CMP-3-deoxy-D-manno-octulosonate biosynthesis; CMP-3-deoxy-D-manno-octulosonate from 3-deoxy-D-manno-octulosonate and CTP: step 1/1. It functions in the pathway bacterial outer membrane biogenesis; lipopolysaccharide biosynthesis. In terms of biological role, activates KDO (a required 8-carbon sugar) for incorporation into bacterial lipopolysaccharide in Gram-negative bacteria. The sequence is that of 3-deoxy-manno-octulosonate cytidylyltransferase from Polynucleobacter necessarius subsp. necessarius (strain STIR1).